We begin with the raw amino-acid sequence, 173 residues long: Bifunctional protein PyrR (173 aa).

The short motif at 93-105 (VILVDDVLYTGRT) is the PRPP-binding element.

It belongs to the purine/pyrimidine phosphoribosyltransferase family. PyrR subfamily. As to quaternary structure, homodimer and homohexamer; in equilibrium.

The catalysed reaction is UMP + diphosphate = 5-phospho-alpha-D-ribose 1-diphosphate + uracil. Functionally, regulates transcriptional attenuation of the pyrimidine nucleotide (pyr) operon by binding in a uridine-dependent manner to specific sites on pyr mRNA. This disrupts an antiterminator hairpin in the RNA and favors formation of a downstream transcription terminator, leading to a reduced expression of downstream genes. Also displays a weak uracil phosphoribosyltransferase activity which is not physiologically significant. This is Bifunctional protein PyrR from Streptococcus pneumoniae (strain 70585).